Reading from the N-terminus, the 498-residue chain is Pre-glycoprotein polyprotein GP complex (498 aa).

Gly-2 carries N-myristoyl glycine; by host lipidation. The Extracellular portion of the chain corresponds to 2-17 (GQIVTMFEALPHIIDE). Residues 18-33 (VINIVIIVLIVITGIK) form a helical membrane-spanning segment. Residues 34–58 (AVYNFATCGIFALISFLLLAGRSCG) are Cytoplasmic-facing. Residue Cys-57 participates in Zn(2+) binding. Topologically, residues 59–438 (MYGLKGPDIY…QGSTPLALMD (380 aa)) are extracellular. N-linked (GlcNAc...) asparagine; by host glycans are attached at residues Asn-85, Asn-95, Asn-114, Asn-124, and Asn-171. Cystine bridges form between Cys-92–Cys-239, Cys-123–Cys-160, Cys-184–Cys-220, Cys-285–Cys-298, Cys-307–Cys-316, and Cys-370–Cys-391. Asn-232 carries N-linked (GlcNAc...) asparagine; by host glycosylation. Asn-371, Asn-396, and Asn-401 each carry an N-linked (GlcNAc...) asparagine; by host glycan. A helical membrane pass occupies residues 439-459 (LLMFSTSAYLVSIFLHLVKIP). Topologically, residues 460 to 498 (THRHIKGGSCPKPHRLTNKGICSCGAFKVPGVKTVWKRR) are cytoplasmic. 6 residues coordinate Zn(2+): His-461, His-463, Cys-469, His-473, Cys-481, and Cys-483.

It belongs to the arenaviridae GPC protein family. Interacts with glycoprotein G2. Part of the GP complex (GP-C) together with glycoprotein G1 and glycoprotein G2. The GP-complex interacts with protein Z, which interacts with ribonucleocapsid; these interactions may induce virion budding. In terms of assembly, homotrimer; disulfide-linked. In pre-fusion state, G1 homotrimers bind G2 homotrimers via ionic interactions. Part of the GP complex (GP-C) together with glycoprotein G2 and the stable signal peptide. Interacts with the primary host receptor DAG1 on the cell surface. The GP-complex interacts with protein Z, which interacts with ribonucleocapsid; these interactions may induce virion budding. As to quaternary structure, homotrimer. Interacts with the stable signal peptide. In pre-fusion state, G2 homotrimers bind G1 homotrimers via ionic interactions. Part of the GP complex (GP-C) together with glycoprotein G1 and the stable signal peptide. Acidification in the endosome triggers rearrangements, which ultimately leads to a 6 helix bundle formed by the two heptad repeat domains (HR1 and HR2) in post-fusion state. The GP-complex interacts with protein Z, which interacts with ribonucleocapsid; these interactions may induce virion budding. Post-translationally, specific enzymatic cleavages in vivo yield mature proteins. GP-C polyprotein is cleaved in the endoplasmic reticulum by the host protease MBTPS1. Only cleaved glycoprotein is incorporated into virions. In terms of processing, the SSP remains stably associated with the GP complex following cleavage by signal peptidase and plays crucial roles in the trafficking of GP through the secretory pathway. Myristoylation is necessary for GP2-mediated fusion activity. Inhibition of host myristoylation by the compound DDD85646 leads to the abrogation of GP2-mediated fusion upon exposure to low pH and inhibition of viral multiplication.

Its subcellular location is the virion membrane. It localises to the host endoplasmic reticulum membrane. The protein resides in the host Golgi apparatus membrane. The protein localises to the host cell membrane. Functions as a cleaved signal peptide that is retained as the third component of the GP complex (GP-C). Helps to stabilize the spike complex in its native conformation. The SSP is required for efficient glycoprotein expression, post-translational maturation cleavage of G1 and G2, glycoprotein transport to the cell surface plasma membrane, formation of infectious virus particles, and acid pH-dependent glycoprotein-mediated cell fusion. Functionally, forms the virion spikes together with glycoprotein G2. The glycoprotein spike trimers are connected to the underlying matrix. Interacts with the host receptor. Mediates virus attachment to the host primary receptor alpha-dystroglycan DAG1 (alpha-DG) at the cell surface. Down-modulates host DAG1. Its function is as follows. Forms the virion spikes together with glycoprotein G1. The glycoprotein spike trimers are connected to the underlying matrix. Class I viral fusion protein that directs fusion of viral and host endosomal membranes, leading to delivery of the nucleocapsid into the cytoplasm. Membrane fusion is mediated by irreversible conformational changes induced by acidification. This Homo sapiens (Human) protein is Pre-glycoprotein polyprotein GP complex.